A 95-amino-acid polypeptide reads, in one-letter code: uncharacterized protein (95 aa).

A helical transmembrane segment spans residues 27–47 (SFGLAIIGILLIACEIILFLT).

The protein localises to the membrane. This is an uncharacterized protein from Homo sapiens (Human).